A 100-amino-acid chain; its full sequence is MAEIAVEVVYALPERQALLRLSVPAGTSAREAVRLSGIAEVFPELDIHCCPLGIFGKALANPEERPLEAGERVEIYRPLIADPKEVRKQRAARARAERGD.

The protein belongs to the UPF0125 (RnfH) family.

In Pseudomonas paraeruginosa (strain DSM 24068 / PA7) (Pseudomonas aeruginosa (strain PA7)), this protein is Protein RnfH.